The chain runs to 271 residues: Phosphonates import ATP-binding protein PhnC 2 (271 aa).

The 245-residue stretch at 2-246 folds into the ABC transporter domain; it reads LTVDNLEKTY…ARDEIYRGGE (245 aa). 35–42 serves as a coordination point for ATP; that stretch reads GPSGAGKS. Residues 243–254 show a composition bias toward basic and acidic residues; it reads RGGESIADREEP. Residues 243–271 are disordered; sequence RGGESIADREEPSAGNSTDADDVIAERGD.

Belongs to the ABC transporter superfamily. Phosphonates importer (TC 3.A.1.9.1) family. As to quaternary structure, the complex is composed of two ATP-binding proteins (PhnC), two transmembrane proteins (PhnE) and a solute-binding protein (PhnD).

It is found in the cell membrane. It catalyses the reaction phosphonate(out) + ATP + H2O = phosphonate(in) + ADP + phosphate + H(+). In terms of biological role, part of the ABC transporter complex PhnCDE involved in phosphonates import. Responsible for energy coupling to the transport system. This is Phosphonates import ATP-binding protein PhnC 2 from Haloarcula marismortui (strain ATCC 43049 / DSM 3752 / JCM 8966 / VKM B-1809) (Halobacterium marismortui).